The primary structure comprises 570 residues: Ribosome-inactivating protein SNAIf (570 aa).

An N-terminal signal peptide occupies residues 1 to 28 (MRVVTKLLYLVVLAICGLGIHGALTHTR). 3 N-linked (GlcNAc...) asparagine glycosylation sites follow: N40, N62, and N140. E199 is a catalytic residue. N232 carries N-linked (GlcNAc...) asparagine glycosylation. 3 disulfide bridges follow: C284-C316, C332-C351, and C373-C385. 2 consecutive Ricin B-type lectin domains span residues 319-439 (VEVT…WTVG) and 441-566 (VEPL…WITT). One copy of the 1-alpha repeat lies at 329 to 369 (DGLCVDVRDGHYIDGNTVQLGPCGNECNQLWTFRTDGTIRW). The stretch at 370–405 (LGKCLTTSSSVMIYDCNTVPPEATKWVVSTDGTITN) is one 1-beta repeat. A 1-gamma repeat occupies 408–440 (SGLVLTAPQAAEGTALSLENNIHAARQGWTVGD). The 2-alpha repeat unit spans residues 452–489 (KQMCLTENGENNFVWLEDCVLNRVEQEWALYGDGTIRV). A disulfide bridge links C455 with C470. N-linked (GlcNAc...) asparagine glycosylation occurs at N492. One copy of the 2-beta repeat lies at 493-531 (RSLCVTSEDHEPSDLIVILKCEGSGNQRWVFNTNGTISN). An intrachain disulfide couples C496 to C513. N-linked (GlcNAc...) asparagine glycans are attached at residues N526 and N544. One copy of the 2-gamma repeat lies at 534 to 567 (AKLVMDVAQSNVSLRKIILYPPTGNPNQQWITTT).

This sequence belongs to the ribosome-inactivating protein family. Type 2 RIP subfamily. Tetramer of four pairs of disulfide bound A-B chains. Post-translationally, the precursor is processed in two chains, A and B, that are linked by a disulfide bond. A small truncated form corresponding roughly to the second ricin B-type lectin domain of the B chain, TrSNAIf, can also be produced. N-glycosylated. As to expression, expressed in fruits.

It carries out the reaction Endohydrolysis of the N-glycosidic bond at one specific adenosine on the 28S rRNA.. Its function is as follows. Neu5Ac(alpha2-6)Gal/GalNAc specific agglutinin. Behaves as a type-2 ribosome-inactivating protein. Strongly inhibits mammalian but not plant ribosomes. The A chain is responsible for inhibiting protein synthesis through the catalytic inactivation of 60S ribosomal subunits by removing adenine from position 4,324 of 28S rRNA. The B chain binds to cell receptors and probably facilitates the entry into the cell of the A chain; B chains are also responsible for cell agglutination (lectin activity). Involved in plant defense against insects. In terms of biological role, binds Neu5Ac(alpha2-6)Gal/GalNAc but has no clear agglutination activity. The chain is Ribosome-inactivating protein SNAIf from Sambucus nigra (European elder).